The following is a 345-amino-acid chain: D-fructose 1,6-bisphosphatase class 2/sedoheptulose 1,7-bisphosphatase (345 aa).

4 residues coordinate Mn(2+): Asp-33, Glu-57, Asp-97, and Glu-100. Substrate is bound by residues 100–102 (EGT), Tyr-131, 176–178 (RPR), and 198–200 (DGD). A Mn(2+)-binding site is contributed by Glu-225.

This sequence belongs to the FBPase class 2 family. As to quaternary structure, homotetramer. Mn(2+) serves as cofactor.

The enzyme catalyses beta-D-fructose 1,6-bisphosphate + H2O = beta-D-fructose 6-phosphate + phosphate. It catalyses the reaction D-sedoheptulose 1,7-bisphosphate + H2O = D-sedoheptulose 7-phosphate + phosphate. It participates in carbohydrate biosynthesis; Calvin cycle. Its function is as follows. Catalyzes the hydrolysis of fructose 1,6-bisphosphate (Fru 1,6-P2) and sedoheptulose 1,7-bisphosphate (Sed 1,7-P2) to fructose 6-phosphate and sedoheptulose 7-phosphate, respectively. This Microcystis aeruginosa (strain NIES-843 / IAM M-2473) protein is D-fructose 1,6-bisphosphatase class 2/sedoheptulose 1,7-bisphosphatase.